We begin with the raw amino-acid sequence, 163 residues long: NADH-quinone oxidoreductase subunit I (163 aa).

2 consecutive 4Fe-4S ferredoxin-type domains span residues 53 to 83 and 94 to 123; these read LRRYPNGEERCIACKLCEAICPAQAITIEAG and VRYDIDMVKCIYCGFCQEACPVDAIVEGPN. [4Fe-4S] cluster is bound by residues Cys63, Cys66, Cys69, Cys73, Cys103, Cys106, Cys109, and Cys113.

This sequence belongs to the complex I 23 kDa subunit family. As to quaternary structure, NDH-1 is composed of 14 different subunits. Subunits NuoA, H, J, K, L, M, N constitute the membrane sector of the complex. Requires [4Fe-4S] cluster as cofactor.

It localises to the cell inner membrane. It catalyses the reaction a quinone + NADH + 5 H(+)(in) = a quinol + NAD(+) + 4 H(+)(out). Its function is as follows. NDH-1 shuttles electrons from NADH, via FMN and iron-sulfur (Fe-S) centers, to quinones in the respiratory chain. The immediate electron acceptor for the enzyme in this species is believed to be ubiquinone. Couples the redox reaction to proton translocation (for every two electrons transferred, four hydrogen ions are translocated across the cytoplasmic membrane), and thus conserves the redox energy in a proton gradient. The sequence is that of NADH-quinone oxidoreductase subunit I from Brucella melitensis biotype 1 (strain ATCC 23456 / CCUG 17765 / NCTC 10094 / 16M).